The chain runs to 630 residues: Plastin-3 (630 aa).

EF-hand domains follow at residues 12-47 and 52-87; these read DELD…ANMP and KVRE…VKSS. 9 residues coordinate Ca(2+): Asp-25, Asn-27, Asn-29, Glu-36, Asp-65, Asn-67, Asp-69, Lys-71, and Glu-76. Actin-binding stretches follow at residues 109 to 382 and 383 to 627; these read TSEL…ALTK and PENQ…GRGM. 2 consecutive Calponin-homology (CH) domains span residues 123–239 and 267–378; these read EEEK…KIGL and LSPE…NKYP. 4 positions are modified to phosphoserine: Ser-268, Ser-293, Ser-326, and Ser-339. A Phosphothreonine modification is found at Thr-391. Calponin-homology (CH) domains lie at 397–506 and 518–627; these read TREE…RRYT and KATD…GRGM.

Monomer.

It is found in the cytoplasm. Functionally, actin-bundling protein. In Rattus norvegicus (Rat), this protein is Plastin-3 (Pls3).